A 603-amino-acid polypeptide reads, in one-letter code: Ribosome-inactivating protein PMRIPt (603 aa).

Positions 1 to 39 (MRVVAGILYIVVMAICGLGIQGGTLQDYPSVYFQDSTLQ) are cleaved as a signal peptide. Residues Asn-74 and Asn-168 are each glycosylated (N-linked (GlcNAc...) asparagine). The active site involves Glu-208. 3 disulfide bridges follow: Cys-297–Cys-335, Cys-351–Cys-370, and Cys-392–Cys-409. Ricin B-type lectin domains follow at residues 338–466 (GEPT…VGDD) and 467–593 (VEPI…WMTM). Residues 348–388 (DGLCMDVRNESNNDGIPIQLWPCGAQRNQQWTFHTDGTIQS) form a 1-alpha repeat. N-linked (GlcNAc...) asparagine glycans are attached at residues Asn-356 and Asn-408. The stretch at 389–430 (MGKCMTSNGYHPGDYVMIFNCSTAPVPDATKWVVSIDGSITN) is one 1-beta repeat. One copy of the 1-gamma repeat lies at 433-466 (SGLVLTAPQAAQTTILLVVRNTHSAKQGRSVGDD). One copy of the 2-alpha repeat lies at 478–516 (KYMCLQGNNENNTRVWLEDCAVDRPQQWWALYSDGTIRV). Intrachain disulfides connect Cys-481–Cys-497 and Cys-523–Cys-540. Residue Asn-488 is glycosylated (N-linked (GlcNAc...) asparagine). A 2-beta repeat occupies 520–558 (RSLCVTSDGHSSRDAIIILTCDGGINQRLVFNTDGTILN). One copy of the 2-gamma repeat lies at 561–597 (AQLVMDVRQSNVALRQIILYQPTGNPNQQWMTMITRT).

It belongs to the ribosome-inactivating protein family. Type 2 RIP subfamily. Tetramer of four pairs of disulfide bound A-B chains. In terms of processing, the precursor is processed in two chains, A and B, that are linked by a disulfide bond. Glycosylated. In terms of tissue distribution, expressed in rhizome and more abundantly in leaves (at protein level).

It catalyses the reaction Endohydrolysis of the N-glycosidic bond at one specific adenosine on the 28S rRNA.. Its activity is regulated as follows. Strongly inhibited by asialofetuin and asialomucin. Functionally, galNAc-specific agglutinin. Behaves as a type-2 ribosome-inactivating protein. Inhibits mammalian ribosomes. The A chain is responsible for inhibiting protein synthesis through the catalytic inactivation of 60S ribosomal subunits by removing adenine from position 4,324 of 28S rRNA. The B chain binds to cell receptors and probably facilitates the entry into the cell of the A chain; B chains are also responsible for cell agglutination (lectin activity). Involved in plant defense against insects. Has very low cytotoxic activity against the human tumor cell lines CEM and Molt4. This Polygonatum multiflorum (Solomon's seal) protein is Ribosome-inactivating protein PMRIPt.